The sequence spans 272 residues: Cell division protein DivIB (272 aa).

Over Met-1 to Arg-21 the chain is Cytoplasmic. A helical transmembrane segment spans residues Ile-22–Leu-42. The region spanning Arg-43–Asn-115 is the POTRA domain. Residues Arg-43–Lys-272 are Extracellular-facing. Residues Leu-253–Lys-272 form a disordered region.

This sequence belongs to the FtsQ/DivIB family. DivIB subfamily.

The protein localises to the cell membrane. Its function is as follows. Cell division protein that may be involved in stabilizing or promoting the assembly of the division complex. The protein is Cell division protein DivIB of Oenococcus oeni (strain ATCC BAA-331 / PSU-1).